The primary structure comprises 415 residues: Alditol oxidase (415 aa).

An FAD-binding PCMH-type domain is found at 12 to 179 (ITYTAKEVHR…TALTLDLEPA (168 aa)). His46 is modified (pros-8alpha-FAD histidine). Residues Ser106, Ser111, Gly114, 118 to 121 (TGTH), and Val169 contribute to the FAD site. Ser106 lines the xylitol pocket. Residues Glu317, Arg319, and Thr342 each coordinate xylitol. Arg319 provides a ligand contact to FAD. Residue His369 coordinates FAD. Position 372 (Lys372) interacts with xylitol.

It belongs to the oxygen-dependent FAD-linked oxidoreductase family. Monomer. FAD is required as a cofactor.

It catalyses the reaction an alditol + O2 = an aldose + H2O2. The catalysed reaction is xylitol + O2 = D-xylose + H2O2. The enzyme catalyses D-sorbitol + O2 = D-glucose + H2O2. Functionally, oxidase that performs selective oxidation of the terminal primary hydroxyl group of several alditols, with a reduction of O2 to H2O2. Shows highest activity on xylitol and D-sorbitol, and to a lesser extent, can also use galactitol, D-mannitol, and D-arabitol as substrates in vitro. Is not active on D-glucose, D-xylose, D-galactose, D-mannose, D-fructose, L-sorbose, L-fucose, myoinositol, glycerol, ethyl alcohol, and meso-erythritol. The protein is Alditol oxidase of Streptomyces sp. (strain IKD472 / FERM P-14339).